Reading from the N-terminus, the 437-residue chain is Proline--tRNA ligase (437 aa).

It belongs to the class-II aminoacyl-tRNA synthetase family. ProS type 2 subfamily. As to quaternary structure, homodimer.

Its subcellular location is the cytoplasm. The enzyme catalyses tRNA(Pro) + L-proline + ATP = L-prolyl-tRNA(Pro) + AMP + diphosphate. Functionally, catalyzes the attachment of proline to tRNA(Pro) in a two-step reaction: proline is first activated by ATP to form Pro-AMP and then transferred to the acceptor end of tRNA(Pro). The protein is Proline--tRNA ligase of Acidiphilium cryptum (strain JF-5).